Here is a 561-residue protein sequence, read N- to C-terminus: Arginine--tRNA ligase (561 aa).

Residues 129–139 (ANPTGPLHVGH) carry the 'HIGH' region motif.

This sequence belongs to the class-I aminoacyl-tRNA synthetase family. In terms of assembly, monomer.

The protein resides in the cytoplasm. It carries out the reaction tRNA(Arg) + L-arginine + ATP = L-arginyl-tRNA(Arg) + AMP + diphosphate. The polypeptide is Arginine--tRNA ligase (Bordetella bronchiseptica (strain ATCC BAA-588 / NCTC 13252 / RB50) (Alcaligenes bronchisepticus)).